The following is a 392-amino-acid chain: 1-deoxy-D-xylulose 5-phosphate reductoisomerase (392 aa).

NADPH contacts are provided by Thr-10, Gly-11, Ser-12, Ile-13, Arg-37, Gln-38, and Asn-124. Lys-125 is a 1-deoxy-D-xylulose 5-phosphate binding site. Glu-126 contributes to the NADPH binding site. Mn(2+) is bound at residue Asp-150. The 1-deoxy-D-xylulose 5-phosphate site is built by Ser-151, Glu-152, Ser-179, and His-202. Glu-152 is a Mn(2+) binding site. Gly-208 is a binding site for NADPH. 4 residues coordinate 1-deoxy-D-xylulose 5-phosphate: Ser-215, Asn-220, Lys-221, and Glu-224. Glu-224 lines the Mn(2+) pocket.

This sequence belongs to the DXR family. Mg(2+) is required as a cofactor. Mn(2+) serves as cofactor.

The catalysed reaction is 2-C-methyl-D-erythritol 4-phosphate + NADP(+) = 1-deoxy-D-xylulose 5-phosphate + NADPH + H(+). It participates in isoprenoid biosynthesis; isopentenyl diphosphate biosynthesis via DXP pathway; isopentenyl diphosphate from 1-deoxy-D-xylulose 5-phosphate: step 1/6. Its function is as follows. Catalyzes the NADPH-dependent rearrangement and reduction of 1-deoxy-D-xylulose-5-phosphate (DXP) to 2-C-methyl-D-erythritol 4-phosphate (MEP). The polypeptide is 1-deoxy-D-xylulose 5-phosphate reductoisomerase (Cupriavidus metallidurans (strain ATCC 43123 / DSM 2839 / NBRC 102507 / CH34) (Ralstonia metallidurans)).